Reading from the N-terminus, the 101-residue chain is Small ribosomal subunit protein uS14A (101 aa).

Disordered stretches follow at residues 1–21 (MAKK…AHHA) and 49–73 (QRLP…PRGT). Basic and acidic residues-rich tracts occupy residues 8 to 21 (AKNE…AHHA) and 61 to 70 (RNRDAADGRP).

The protein belongs to the universal ribosomal protein uS14 family. Part of the 30S ribosomal subunit. Contacts proteins S3 and S10.

In terms of biological role, binds 16S rRNA, required for the assembly of 30S particles and may also be responsible for determining the conformation of the 16S rRNA at the A site. The protein is Small ribosomal subunit protein uS14A of Kineococcus radiotolerans (strain ATCC BAA-149 / DSM 14245 / SRS30216).